The primary structure comprises 365 residues: Putrescine carbamoyltransferase (365 aa).

Carbamoyl phosphate is bound by residues 54 to 58 (STRTR), arginine 105, and histidine 132. 277–280 (HCLP) contacts putrescine.

Belongs to the aspartate/ornithine carbamoyltransferase superfamily. PTCase family. In terms of assembly, homotrimer.

The protein resides in the cytoplasm. The catalysed reaction is carbamoyl phosphate + putrescine = N-carbamoylputrescine + phosphate + H(+). The protein operates within amine and polyamine biosynthesis; putrescine biosynthesis via agmatine pathway; putrescine from N-carbamoylputrescine (transferase route): step 1/1. Catalyzes the phosphorolysis of N-carbamoylputrescine to form carbamoyl phosphate and putrescine. Is involved in the degradation pathway of the polyamine agmatine. The polypeptide is Putrescine carbamoyltransferase (Mycoplasma capricolum subsp. capricolum (strain California kid / ATCC 27343 / NCTC 10154)).